A 397-amino-acid chain; its full sequence is Acetate kinase (397 aa).

Asn-8 is a binding site for Mg(2+). Lys-15 lines the ATP pocket. Residue Arg-89 participates in substrate binding. The active-site Proton donor/acceptor is Asp-146. Residues 206-210, 283-285, and 331-335 each bind ATP; these read HVGNG, DMR, and GIGEN. A Mg(2+)-binding site is contributed by Glu-383.

The protein belongs to the acetokinase family. As to quaternary structure, homodimer. Requires Mg(2+) as cofactor. Mn(2+) is required as a cofactor.

Its subcellular location is the cytoplasm. It catalyses the reaction acetate + ATP = acetyl phosphate + ADP. It participates in metabolic intermediate biosynthesis; acetyl-CoA biosynthesis; acetyl-CoA from acetate: step 1/2. In terms of biological role, catalyzes the formation of acetyl phosphate from acetate and ATP. Can also catalyze the reverse reaction. The polypeptide is Acetate kinase (Streptococcus thermophilus (strain ATCC BAA-491 / LMD-9)).